The following is a 149-amino-acid chain: Thiosulfate sulfurtransferase RDL2, mitochondrial (149 aa).

A mitochondrion-targeting transit peptide spans 1 to 25 (MFKHSTGILSRTVSARSPTLVLRTF). One can recognise a Rhodanese domain in the interval 45-146 (PNDKKLLVDV…WLAKGGADVK (102 aa)). C106 serves as the catalytic Cysteine persulfide intermediate.

It is found in the mitochondrion. The enzyme catalyses thiosulfate + hydrogen cyanide = thiocyanate + sulfite + 2 H(+). Functionally, thiosulfate sulfurtransferase which catalyzes the transfer of sulfane sulfur from thiosulfate to cyanide. The polypeptide is Thiosulfate sulfurtransferase RDL2, mitochondrial (RDL2) (Saccharomyces cerevisiae (strain ATCC 204508 / S288c) (Baker's yeast)).